Consider the following 484-residue polypeptide: Protein nucleotidyltransferase YdiU (484 aa).

ATP is bound by residues Gly-81, Gly-83, Arg-84, Lys-103, Asp-115, Gly-116, Arg-166, and Arg-173. Asp-244 acts as the Proton acceptor in catalysis. The Mg(2+) site is built by Asn-245 and Asp-254. Position 254 (Asp-254) interacts with ATP.

The protein belongs to the SELO family. Requires Mg(2+) as cofactor. Mn(2+) serves as cofactor.

The enzyme catalyses L-seryl-[protein] + ATP = 3-O-(5'-adenylyl)-L-seryl-[protein] + diphosphate. The catalysed reaction is L-threonyl-[protein] + ATP = 3-O-(5'-adenylyl)-L-threonyl-[protein] + diphosphate. It carries out the reaction L-tyrosyl-[protein] + ATP = O-(5'-adenylyl)-L-tyrosyl-[protein] + diphosphate. It catalyses the reaction L-histidyl-[protein] + UTP = N(tele)-(5'-uridylyl)-L-histidyl-[protein] + diphosphate. The enzyme catalyses L-seryl-[protein] + UTP = O-(5'-uridylyl)-L-seryl-[protein] + diphosphate. The catalysed reaction is L-tyrosyl-[protein] + UTP = O-(5'-uridylyl)-L-tyrosyl-[protein] + diphosphate. Nucleotidyltransferase involved in the post-translational modification of proteins. It can catalyze the addition of adenosine monophosphate (AMP) or uridine monophosphate (UMP) to a protein, resulting in modifications known as AMPylation and UMPylation. This is Protein nucleotidyltransferase YdiU from Shewanella baltica (strain OS195).